We begin with the raw amino-acid sequence, 334 residues long: Protein-methionine-sulfoxide reductase catalytic subunit MsrP (334 aa).

The tat-type signal signal peptide spans 1–44 (MKKNQFLKESDVTAESVFFMKRRQVLKALGISAAALSLPHAAHA). Residues N88, 91 to 92 (YE), C146, T181, N233, R238, and 249 to 251 (GIK) contribute to the Mo-molybdopterin site.

Belongs to the MsrP family. As to quaternary structure, heterodimer of a catalytic subunit (MsrP) and a heme-binding subunit (MsrQ). Mo-molybdopterin is required as a cofactor. In terms of processing, predicted to be exported by the Tat system. The position of the signal peptide cleavage has not been experimentally proven.

It is found in the periplasm. It carries out the reaction L-methionyl-[protein] + a quinone + H2O = L-methionyl-(S)-S-oxide-[protein] + a quinol. The catalysed reaction is L-methionyl-[protein] + a quinone + H2O = L-methionyl-(R)-S-oxide-[protein] + a quinol. Part of the MsrPQ system that repairs oxidized periplasmic proteins containing methionine sulfoxide residues (Met-O), using respiratory chain electrons. Thus protects these proteins from oxidative-stress damage caused by reactive species of oxygen and chlorine generated by the host defense mechanisms. MsrPQ is essential for the maintenance of envelope integrity under bleach stress, rescuing a wide series of structurally unrelated periplasmic proteins from methionine oxidation, including the primary periplasmic chaperone SurA and the lipoprotein Pal. The catalytic subunit MsrP is non-stereospecific, being able to reduce both (R-) and (S-) diastereoisomers of methionine sulfoxide. In Escherichia coli O157:H7, this protein is Protein-methionine-sulfoxide reductase catalytic subunit MsrP.